Here is a 135-residue protein sequence, read N- to C-terminus: uncharacterized protein (135 aa).

The region spanning 2 to 71 is the HTH merR-type domain; the sequence is TYTTAKAAEK…LKDIKRFAEC (70 aa). The segment at residues 5–24 is a DNA-binding region (H-T-H motif); the sequence is TAKAAEKIGISAYTLRFYDK.

This is an uncharacterized protein from Haemophilus influenzae (strain ATCC 51907 / DSM 11121 / KW20 / Rd).